We begin with the raw amino-acid sequence, 295 residues long: Protoheme IX farnesyltransferase (295 aa).

9 consecutive transmembrane segments (helical) span residues 24–44 (IMYLVVFTAVAGMVTAPGSMH), 45–65 (PFLALISLICVALGSGSAGAI), 94–114 (SALEFGITLGILSVFIMAIAV), 117–137 (ISAALLAVSILFYVFIYTIWL), 144–164 (NIVIGGAAGAFPPMIGWAAVT), 171–191 (SFILFLVIFMWTPPHFWALSL), 216–236 (KYILIYSVLLVLTSLLPALFL), 240–260 (LLYLSMATFEGCVFIWYAVSV), and 272–292 (MFSYSISYLFSLFASIIFCSI).

This sequence belongs to the UbiA prenyltransferase family. Protoheme IX farnesyltransferase subfamily.

Its subcellular location is the cell membrane. The catalysed reaction is heme b + (2E,6E)-farnesyl diphosphate + H2O = Fe(II)-heme o + diphosphate. The protein operates within porphyrin-containing compound metabolism; heme O biosynthesis; heme O from protoheme: step 1/1. In terms of biological role, converts heme B (protoheme IX) to heme O by substitution of the vinyl group on carbon 2 of heme B porphyrin ring with a hydroxyethyl farnesyl side group. The polypeptide is Protoheme IX farnesyltransferase (Wolbachia pipientis wMel).